A 254-amino-acid polypeptide reads, in one-letter code: MSWKRHHLIPETFGVKRRRKRGPVESDPLRGEPGSARAAVSELMQLFPRGLFEDALPPIVLRSQVYSLVPDRTVADRQLKELQEQGEIRIVQLGFDLDAHGIIFTEDYRTRVLKACDGRPYAGAVQKFLASVLPACGDLSFQQDQMTQTFGFRDSEITHLVNAGVLTVRDAGSWWLAVPGAGRFIKYFVKGRQAVLSMVRKAKYRELLLSELLGRRAPVVVRLGLTYHVHDLIGAQLVDCISTTSGTLLRLPET.

A Bipartite nuclear localization signal motif is present at residues 4-21; that stretch reads KRHHLIPETFGVKRRRKR. 3 winged helix domain regions span residues 32–104, 120–179, and 180–254; these read EPGS…GIIF, PYAG…LAVP, and GAGR…LPET.

This sequence belongs to the STK19 family. Monomer in solution. Homodimer; when bound to DNA. Component of a transcription-coupled nucleotide excision repair (TC-NER) complex composed of STK19, ERCC6, ERCC8, DDA1, DDB1, ELOF1 and UVSSA which assembles and interacts with the multiprotein RNA polymerase II complex when it stalls at DNA lesions. In terms of tissue distribution, monocytes, hepatocytes, epithelial cells, T- and B-lymphocytes.

The protein localises to the nucleus. Its subcellular location is the cytoplasm. In terms of biological role, DNA-binding protein which is required for efficient transcription-coupled nucleotide excision repair (TC-NER). Acts as part of a TC-NER complex which assembles and interacts with RNA polymerase II (RNAPII) when it stalls at DNA lesions. TC-NER complex subunit UVSSA binds to the GTF2H1/p62 subunit of the TFIIH transcription factor complex, tethering TFIIH to the TC-NER complex. WHR1/STK19 then interacts with the XPD helicase subunit of TFIIH which guides TFIIH to DNA downstream of the stalled RNAPII, ensuring DNA repair. Directly interacts with RNAPII and also binds to downstream DNA. Promotes the timely removal of DNA damage-stalled RNAPII, allowing downstream NER factors to access DNA lesions. Required for monoubiquitination of UVSSA. Regulates repositioning and stabilization of UVSSA within the TC-NER complex. Stimulates ubiquitination of RNAPII complex member RBP1. Also binds to RNA and regulates the expression levels of many mRNAs. In Homo sapiens (Human), this protein is Winged helix repair factor 1.